A 357-amino-acid polypeptide reads, in one-letter code: UDP-N-acetylglucosamine--N-acetylmuramyl-(pentapeptide) pyrophosphoryl-undecaprenol N-acetylglucosamine transferase (357 aa).

UDP-N-acetyl-alpha-D-glucosamine-binding positions include 13 to 15 (TGG), Asn125, Arg161, Ser189, Ile243, and Gln288.

The protein belongs to the glycosyltransferase 28 family. MurG subfamily.

The protein localises to the cell inner membrane. The enzyme catalyses di-trans,octa-cis-undecaprenyl diphospho-N-acetyl-alpha-D-muramoyl-L-alanyl-D-glutamyl-meso-2,6-diaminopimeloyl-D-alanyl-D-alanine + UDP-N-acetyl-alpha-D-glucosamine = di-trans,octa-cis-undecaprenyl diphospho-[N-acetyl-alpha-D-glucosaminyl-(1-&gt;4)]-N-acetyl-alpha-D-muramoyl-L-alanyl-D-glutamyl-meso-2,6-diaminopimeloyl-D-alanyl-D-alanine + UDP + H(+). Its pathway is cell wall biogenesis; peptidoglycan biosynthesis. Its function is as follows. Cell wall formation. Catalyzes the transfer of a GlcNAc subunit on undecaprenyl-pyrophosphoryl-MurNAc-pentapeptide (lipid intermediate I) to form undecaprenyl-pyrophosphoryl-MurNAc-(pentapeptide)GlcNAc (lipid intermediate II). The polypeptide is UDP-N-acetylglucosamine--N-acetylmuramyl-(pentapeptide) pyrophosphoryl-undecaprenol N-acetylglucosamine transferase (Bordetella parapertussis (strain 12822 / ATCC BAA-587 / NCTC 13253)).